A 717-amino-acid polypeptide reads, in one-letter code: Scinderin (717 aa).

The segment at 1–363 is actin-severing; it reads MAPERHPPAF…DGFGKVYVTE (363 aa). One copy of the Gelsolin-like 1 repeat lies at 28–108; sequence ELVPVPPSRH…IQGYESNEFV (81 aa). A 1,2-diacyl-sn-glycero-3-phospho-(1D-myo-inositol-4,5-bisphosphate)-binding positions include 112 to 119 and 138 to 146; these read KGGIKYKA and RLLHIKGRR. Gelsolin-like repeat units lie at residues 148–220, 265–340, 408–483, 526–590, and 628–703; these read VRAT…PDEL, VVAE…TPIF, RVPV…PHLL, AEVD…EEFW, and IEEV…PPTF. The ca(2+)-dependent actin binding stretch occupies residues 364–715; sequence RVAKIEQIEF…WFLAWDSNKW (352 aa). Ca(2+) is bound by residues Asn-538, Asp-539, Glu-562, Asp-643, Asp-644, and Glu-666.

It belongs to the villin/gelsolin family.

The protein localises to the cytoplasm. Its subcellular location is the cytoskeleton. It localises to the cell projection. The protein resides in the podosome. In terms of biological role, ca(2+)-dependent actin filament-severing protein that has a regulatory function in exocytosis by affecting the organization of the microfilament network underneath the plasma membrane. In vitro, also has barbed end capping and nucleating activities in the presence of Ca(2+). Severing activity is inhibited by phosphatidylinositol 4,5-bis-phosphate (PIP2). Required for megakaryocyte differentiation, maturation, polyploidization and apoptosis with the release of platelet-like particles. Plays a role in osteoclastogenesis (OCG) and actin cytoskeletal organization in osteoclasts. Regulates chondrocyte proliferation and differentiation. Inhibits cell proliferation and tumorigenesis. Signaling is mediated by MAPK, p38 and JNK pathways. The chain is Scinderin (SCIN) from Gallus gallus (Chicken).